A 1034-amino-acid polypeptide reads, in one-letter code: MGVSLRHLSPSSFWVSRRPRVSSSILSFLVPRRRILCTRKVAIIKGNAGYSTATDCGGSHGFHHSGHQRSSSVEFSGEWKLNLGSKTARMVPPTVKQAGAVSAWREEVNNKLRGRNREYANNQDDAFGNGSYILKGFVPKIDDVHSYGNGQNFDYNLKPGTDITTLGRELNGFMQTNSIRGSVVALPSKDIEVGETTDVTLKPLNSDTTLDNASYKKTATISKVEKCTNLSQVRANLKKIYNRVRVVDNVSSAKETVALLMNQYRNLVHACDTEVSRIDVKTETPVDHGEMICFSIYCGSEADFGDGKSCIWVDVLGENGRDILAEFKPFFEDSSIKKVWHNYSFDNHIIRNYGIKLSGFHGDTMHMARLWDSSRRISGGYSLEALTSDPKVLGGTETKEEAELFGKISMKKIFGKGKLKKDGSEGKLVIIPPVKELQMEDREAWISYSALDSISTLKLYESMKKQLQAKKWFLDGKLISKKNMFDFYQEYWQPFGELLAKMESEGMLVDRDYLAQIEIVAKAEQEIAVSRFRNWASKHCPDAKHMNVGSDTQLRQLFFGGISNSCNDEDLPYEKLFKVPNVDKVIEEGKKRATKFRNIKLHRISDRPLPTEKFTASGWPSVSGDTLKALAGKVSAEYDYMEGVLDTCLEENIGDDDCISLPDEVVETQHVNTSVESDTSAYGTAFDAFGGGESGKEACHAIAALCEVCSIDSLISNFILPLQGSNVSGKDGRVHCSLNINTETGRLSARRPNLQNQPALEKDRYKIRQAFIASPGNSLIVADYGQLELRILAHLASCESMKEAFIAGGDFHSRTAMNMYPHIREAVENGEVLLEWHPQPGQEKPPVPLLKDAFASERRKAKMLNFSIAYGKTAIGLSRDWKVSREEAQDTVNLWYNDRQEVRKWQELRKKEAIQKGYVLTLLGRARKFPEYRSRAQKNHIERAAINTPVQGSAADVAMCAMLEISNNQRLKELGWKLLLQVHDEVILEGPSESAENAKDIVVNCMSEPFNGKNILSVDLSVDAKCAQNWYAGK.

Residues 1 to 55 (MGVSLRHLSPSSFWVSRRPRVSSSILSFLVPRRRILCTRKVAIIKGNAGYSTATD) constitute a chloroplast and mitochondrion transit peptide. Residues 270–468 (ACDTEVSRID…LYESMKKQLQ (199 aa)) enclose the 3'-5' exonuclease domain. The tract at residues 700–1030 (HAIAALCEVC…SVDAKCAQNW (331 aa)) is polymerase.

This sequence belongs to the DNA polymerase type-A family. Expressed in shoot apical meristem.

The protein resides in the mitochondrion. The protein localises to the plastid. It localises to the chloroplast. The enzyme catalyses DNA(n) + a 2'-deoxyribonucleoside 5'-triphosphate = DNA(n+1) + diphosphate. Not inhibited by aphidicolin. In addition to polymerase activity, this DNA polymerase exhibits 5'-3' exonuclease activity. Required for DNA replication and accumulation in plastids and mitochondria. The protein is DNA polymerase I B, chloroplastic/mitochondrial (POLIB) of Arabidopsis thaliana (Mouse-ear cress).